The chain runs to 161 residues: Allophycocyanin alpha chain (161 aa).

N4-methylasparagine is present on Asn71. Residue Cys81 participates in (2R,3E)-phycocyanobilin binding.

This sequence belongs to the phycobiliprotein family. As to quaternary structure, heterodimer of an alpha and a beta chain. In terms of processing, contains one covalently linked phycocyanobilin chromophore.

It is found in the plastid. The protein resides in the chloroplast thylakoid membrane. Its function is as follows. Light-harvesting photosynthetic bile pigment-protein from the phycobiliprotein complex. Allophycocyanin has a maximum absorption at approximately 650 nanometers. This is Allophycocyanin alpha chain (apcA) from Aglaothamnion neglectum (Red alga).